The sequence spans 86 residues: Toxin TdNa7 (86 aa).

Residues M1–C20 form the signal peptide. The 63-residue stretch at K21–G83 folds into the LCN-type CS-alpha/beta domain. Cystine bridges form between C31-C82, C35-C57, C43-C63, and C47-C65. K84 carries the lysine amide modification.

The protein belongs to the long (4 C-C) scorpion toxin superfamily. Sodium channel inhibitor family. Beta subfamily. As to expression, expressed by the venom gland.

It is found in the secreted. In terms of biological role, beta toxins bind voltage-independently at site-4 of sodium channels (Nav) and shift the voltage of activation toward more negative potentials thereby affecting sodium channel activation and promoting spontaneous and repetitive firing. The chain is Toxin TdNa7 from Tityus discrepans (Venezuelan scorpion).